Here is a 318-residue protein sequence, read N- to C-terminus: NADH-ubiquinone oxidoreductase chain 1 (318 aa).

8 helical membrane passes run Phe-2–Leu-22, Phe-69–Leu-89, Leu-102–Ala-122, Met-146–Ala-166, His-171–Ala-191, Leu-222–Phe-242, Glu-253–Val-273, and Leu-294–Ile-314.

The protein belongs to the complex I subunit 1 family. Core subunit of respiratory chain NADH dehydrogenase (Complex I) which is composed of 45 different subunits.

Its subcellular location is the mitochondrion inner membrane. The catalysed reaction is a ubiquinone + NADH + 5 H(+)(in) = a ubiquinol + NAD(+) + 4 H(+)(out). In terms of biological role, core subunit of the mitochondrial membrane respiratory chain NADH dehydrogenase (Complex I) which catalyzes electron transfer from NADH through the respiratory chain, using ubiquinone as an electron acceptor. Essential for the catalytic activity and assembly of complex I. This chain is NADH-ubiquinone oxidoreductase chain 1 (MT-ND1), found in Elephas maximus (Indian elephant).